The primary structure comprises 296 residues: Protoheme IX farnesyltransferase (296 aa).

9 helical membrane-spanning segments follow: residues 11-31 (PGII…AAQG), 35-55 (YPLF…GCVF), 84-104 (VTLV…YVAA), 107-127 (LAMW…SLYM), 132-152 (VYGT…GYCA), 162-182 (LILL…IAIF), 208-228 (ITLY…GGYA), 229-249 (GYKY…MALS), and 264-284 (LFVF…VDSM).

This sequence belongs to the UbiA prenyltransferase family. Protoheme IX farnesyltransferase subfamily.

It is found in the cell inner membrane. The enzyme catalyses heme b + (2E,6E)-farnesyl diphosphate + H2O = Fe(II)-heme o + diphosphate. Its pathway is porphyrin-containing compound metabolism; heme O biosynthesis; heme O from protoheme: step 1/1. Its function is as follows. Converts heme B (protoheme IX) to heme O by substitution of the vinyl group on carbon 2 of heme B porphyrin ring with a hydroxyethyl farnesyl side group. The sequence is that of Protoheme IX farnesyltransferase from Pectobacterium atrosepticum (strain SCRI 1043 / ATCC BAA-672) (Erwinia carotovora subsp. atroseptica).